A 188-amino-acid polypeptide reads, in one-letter code: Threonylcarbamoyl-AMP synthase (188 aa).

In terms of domain architecture, YrdC-like spans 8–188 (EGAQPGLHAY…DLATGKILRA (181 aa)).

The protein belongs to the SUA5 family. TsaC subfamily.

The protein localises to the cytoplasm. It carries out the reaction L-threonine + hydrogencarbonate + ATP = L-threonylcarbamoyladenylate + diphosphate + H2O. In terms of biological role, required for the formation of a threonylcarbamoyl group on adenosine at position 37 (t(6)A37) in tRNAs that read codons beginning with adenine. Catalyzes the conversion of L-threonine, HCO(3)(-)/CO(2) and ATP to give threonylcarbamoyl-AMP (TC-AMP) as the acyladenylate intermediate, with the release of diphosphate. This Thiobacillus denitrificans (strain ATCC 25259 / T1) protein is Threonylcarbamoyl-AMP synthase.